The sequence spans 610 residues: Glutamine--fructose-6-phosphate aminotransferase [isomerizing] (610 aa).

Catalysis depends on Cys-2, which acts as the Nucleophile; for GATase activity. The 217-residue stretch at 2–218 (CGIVGAVAQR…EGDVAEITRR (217 aa)) folds into the Glutamine amidotransferase type-2 domain. 2 SIS domains span residues 286–426 (AAEI…QQGR) and 459–600 (LATD…VDQP). Lys-605 (for Fru-6P isomerization activity) is an active-site residue.

Homodimer.

It is found in the cytoplasm. The enzyme catalyses D-fructose 6-phosphate + L-glutamine = D-glucosamine 6-phosphate + L-glutamate. Catalyzes the first step in hexosamine metabolism, converting fructose-6P into glucosamine-6P using glutamine as a nitrogen source. The polypeptide is Glutamine--fructose-6-phosphate aminotransferase [isomerizing] (Vibrio vulnificus (strain YJ016)).